A 216-amino-acid chain; its full sequence is Uracil phosphoribosyltransferase (216 aa).

5-phospho-alpha-D-ribose 1-diphosphate is bound by residues arginine 85, arginine 110, and 135-143 (DPMVATGYS). Uracil is bound by residues isoleucine 200 and 205–207 (GDA). Aspartate 206 serves as a coordination point for 5-phospho-alpha-D-ribose 1-diphosphate.

Belongs to the UPRTase family. Mg(2+) serves as cofactor.

It catalyses the reaction UMP + diphosphate = 5-phospho-alpha-D-ribose 1-diphosphate + uracil. Its pathway is pyrimidine metabolism; UMP biosynthesis via salvage pathway; UMP from uracil: step 1/1. With respect to regulation, allosterically activated by GTP. Catalyzes the conversion of uracil and 5-phospho-alpha-D-ribose 1-diphosphate (PRPP) to UMP and diphosphate. This Burkholderia cenocepacia (strain ATCC BAA-245 / DSM 16553 / LMG 16656 / NCTC 13227 / J2315 / CF5610) (Burkholderia cepacia (strain J2315)) protein is Uracil phosphoribosyltransferase.